A 137-amino-acid polypeptide reads, in one-letter code: Large ribosomal subunit protein uL22c (137 aa).

Belongs to the universal ribosomal protein uL22 family. In terms of assembly, part of the 50S ribosomal subunit.

Its subcellular location is the plastid. The protein localises to the chloroplast. This protein binds specifically to 23S rRNA. Functionally, the globular domain of the protein is located near the polypeptide exit tunnel on the outside of the subunit, while an extended beta-hairpin is found that lines the wall of the exit tunnel in the center of the 70S ribosome. The polypeptide is Large ribosomal subunit protein uL22c (rpl22) (Oenothera argillicola (Appalachian evening primrose)).